The sequence spans 391 residues: Sulfate adenylyltransferase (391 aa).

Belongs to the sulfate adenylyltransferase family.

It catalyses the reaction sulfate + ATP + H(+) = adenosine 5'-phosphosulfate + diphosphate. It functions in the pathway sulfur metabolism; hydrogen sulfide biosynthesis; sulfite from sulfate: step 1/3. This Lactiplantibacillus plantarum (strain ATCC BAA-793 / NCIMB 8826 / WCFS1) (Lactobacillus plantarum) protein is Sulfate adenylyltransferase.